Here is a 389-residue protein sequence, read N- to C-terminus: Large envelope protein (389 aa).

2 stretches are compositionally biased toward polar residues: residues 1 to 10 and 85 to 95; these read MGQNLSTSNP and STNRQTGRQPT. Disordered regions lie at residues 1–54 and 73–106; these read MGQN…AFGL and ILHT…DTHP. Residue glycine 2 is the site of N-myristoyl glycine; by host attachment. The pre-S1 stretch occupies residues 2–108; it reads GQNLSTSNPL…PPLRDTHPQA (107 aa). The segment at 2–163 is pre-S; sequence GQNLSTSNPL…FSRIGDPVTN (162 aa). Residues 2–170 are Virion surface; in external conformation-facing; sequence GQNLSTSNPL…VTNMENITSG (169 aa). The Intravirion; in internal conformation segment spans residues 2 to 242; the sequence is GQNLSTSNPL…PGYRWMCLRG (241 aa). The tract at residues 109 to 163 is pre-S2; it reads VQWNSTTFHQTLQDPRVRGLYFPAGGSSSGTVNPVPTTASPLSSIFSRIGDPVTN. A helical membrane pass occupies residues 171–191; sequence FLGPLLVLQAGFFLLTRILTI. Topologically, residues 192–242 are intravirion; in external conformation; it reads PQSLDSWWTSLNFRGGTTVCLGQNSQSPTSNHSPTSCPPTCPGYRWMCLRG. A helical transmembrane segment spans residues 243 to 263; sequence FIIFLFILLLCLIFLLVLLEY. Residues 264–337 are Virion surface-facing; it reads QGMLHVCPLI…WASVRFSWLS (74 aa). N-linked (GlcNAc...) asparagine; by host glycosylation occurs at asparagine 309. The chain crosses the membrane as a helical span at residues 338–358; it reads LLVPFVQWFVGLSPTVWLSAI. The Intravirion portion of the chain corresponds to 359–364; that stretch reads WMMWYW. The helical transmembrane segment at 365-387 threads the bilayer; sequence GPSLYSILSPFLPLLPIFFCLWV. The Virion surface portion of the chain corresponds to 388–389; that stretch reads YI.

It belongs to the orthohepadnavirus major surface antigen family. In terms of assembly, li-HBsAg interacts with capsid protein and with HDV Large delta antigen. Isoform M associates with host chaperone CANX through its pre-S2 N glycan. This association may be essential for M proper secretion. Post-translationally, isoform M is N-terminally acetylated by host at a ratio of 90%, and N-glycosylated by host at the pre-S2 region. In terms of processing, myristoylated.

The protein localises to the virion membrane. Its function is as follows. The large envelope protein exists in two topological conformations, one which is termed 'external' or Le-HBsAg and the other 'internal' or Li-HBsAg. In its external conformation the protein attaches the virus to cell receptors and thereby initiating infection. This interaction determines the species specificity and liver tropism. This attachment induces virion internalization predominantly through caveolin-mediated endocytosis. The large envelope protein also assures fusion between virion membrane and endosomal membrane. In its internal conformation the protein plays a role in virion morphogenesis and mediates the contact with the nucleocapsid like a matrix protein. Functionally, the middle envelope protein plays an important role in the budding of the virion. It is involved in the induction of budding in a nucleocapsid independent way. In this process the majority of envelope proteins bud to form subviral lipoprotein particles of 22 nm of diameter that do not contain a nucleocapsid. The protein is Large envelope protein of Homo sapiens (Human).